Reading from the N-terminus, the 488-residue chain is Probable G-protein coupled receptor Mth-like 12 (488 aa).

Residues 1-17 form the signal peptide; the sequence is MFLWLKCFCTLIIVTIA. At 18–215 the chain is on the extracellular side; it reads KNSSAKIPHC…NRRCYRNVMP (198 aa). Residues Asn19, Asn34, and Asn55 are each glycosylated (N-linked (GlcNAc...) asparagine). Intrachain disulfides connect Cys27–Cys81, Cys83–Cys88, Cys92–Cys189, Cys93–Cys104, and Cys155–Cys209. A glycan (N-linked (GlcNAc...) asparagine) is linked at Asn141. The chain crosses the membrane as a helical span at residues 216-236; sequence GIAQLSVISVVGFILTLAVYL. Over 237–247 the chain is Cytoplasmic; it reads SVEKLRNLLGK. The chain crosses the membrane as a helical span at residues 248 to 268; the sequence is CLICSLFSMFMEYFIWTMDYF. The Extracellular portion of the chain corresponds to 269–283; sequence RLLQSICSAAGYMKY. Residues 284–304 traverse the membrane as a helical segment; the sequence is FFSMSSYLWFSVVSFHLWELF. The Cytoplasmic portion of the chain corresponds to 305-315; that stretch reads TSLNRHEPQYR. The helical transmembrane segment at 316 to 336 threads the bilayer; it reads FLIYNTFVWCTAAIPTVVIFS. Residues 337-373 lie on the Extracellular side of the membrane; it reads MNQMWENDPGKSEWLPLVGYFGCSVKDWNSSSWFYSH. A glycan (N-linked (GlcNAc...) asparagine) is linked at Asn365. A helical transmembrane segment spans residues 374-394; it reads IPIVILNSFNVIMFVLTAIYI. Residues 395–416 are Cytoplasmic-facing; sequence WKVKKGVKSFAQHDERNTTCLE. The chain crosses the membrane as a helical span at residues 417-437; that stretch reads FNVQTYIQFVRLFLIMGASWL. The Extracellular portion of the chain corresponds to 438-454; sequence LDQLTRLAEDSHLLLDT. A helical transmembrane segment spans residues 455-475; it reads IVLNLTVYLNAAFGILIFVLL. Residues 476–488 are Cytoplasmic-facing; that stretch reads ILKGSTFKMIMER.

Belongs to the G-protein coupled receptor 2 family. Mth subfamily.

It is found in the cell membrane. This is Probable G-protein coupled receptor Mth-like 12 (mthl12) from Drosophila melanogaster (Fruit fly).